A 70-amino-acid polypeptide reads, in one-letter code: Movement protein TGBp3 (70 aa).

At methionine 1–glycine 4 the chain is on the lumenal side. The chain crosses the membrane as a helical span at residues alanine 5–threonine 27. Residues arginine 28 to glutamine 70 lie on the Cytoplasmic side of the membrane.

It belongs to the Tymovirales TGBp3 protein family.

It localises to the host endoplasmic reticulum membrane. In terms of biological role, plays a role in viral cell-to-cell propagation, by facilitating genome transport to neighboring plant cells through plasmosdesmata. May induce the formation of granular vesicles derived from the Endoplasmic reticulum, which align on actin filaments. The polypeptide is Movement protein TGBp3 (Potato virus X (strain CP) (PVX)).